Here is a 221-residue protein sequence, read N- to C-terminus: Hydrogenase expression/formation protein HupD (221 aa).

Residues Glu20, Asp66, and His97 each contribute to the Ni(2+) site.

This sequence belongs to the peptidase A31 family.

In terms of biological role, not known. Could be involved in the processing of hydrogenase. The polypeptide is Hydrogenase expression/formation protein HupD (hupD) (Thiocapsa roseopersicina).